Reading from the N-terminus, the 311-residue chain is tRNA-cytidine(32) 2-sulfurtransferase (311 aa).

The PP-loop motif motif lies at 47–52; sequence SGGKDS. The [4Fe-4S] cluster site is built by C122, C125, and C213.

Belongs to the TtcA family. Homodimer. Mg(2+) serves as cofactor. The cofactor is [4Fe-4S] cluster.

The protein localises to the cytoplasm. The enzyme catalyses cytidine(32) in tRNA + S-sulfanyl-L-cysteinyl-[cysteine desulfurase] + AH2 + ATP = 2-thiocytidine(32) in tRNA + L-cysteinyl-[cysteine desulfurase] + A + AMP + diphosphate + H(+). The protein operates within tRNA modification. In terms of biological role, catalyzes the ATP-dependent 2-thiolation of cytidine in position 32 of tRNA, to form 2-thiocytidine (s(2)C32). The sulfur atoms are provided by the cysteine/cysteine desulfurase (IscS) system. In Escherichia coli (strain SMS-3-5 / SECEC), this protein is tRNA-cytidine(32) 2-sulfurtransferase.